A 215-amino-acid chain; its full sequence is Ribonuclease T (215 aa).

An Exonuclease domain is found at 20-194 (VVIDVETAGF…YDTEQTAQLF (175 aa)). Residues aspartate 23, glutamate 25, histidine 181, and aspartate 186 each coordinate Mg(2+). The active-site Proton donor/acceptor is the histidine 181.

The protein belongs to the RNase T family. In terms of assembly, homodimer. Mg(2+) serves as cofactor.

Functionally, trims short 3' overhangs of a variety of RNA species, leaving a one or two nucleotide 3' overhang. Responsible for the end-turnover of tRNA: specifically removes the terminal AMP residue from uncharged tRNA (tRNA-C-C-A). Also appears to be involved in tRNA biosynthesis. The protein is Ribonuclease T of Klebsiella pneumoniae subsp. pneumoniae (strain ATCC 700721 / MGH 78578).